A 570-amino-acid polypeptide reads, in one-letter code: Spastin (570 aa).

Residues Met-1–Leu-35 are Cytoplasmic-facing. An intramembrane region (helical) is located at residues Ser-36–Trp-52. At Leu-53–Val-570 the chain is on the cytoplasmic side. The MIT domain maps to Tyr-83–Leu-158. The interval Ala-186–Asn-269 is disordered. Composition is skewed to polar residues over residues Leu-199–Arg-208, Thr-216–Gly-242, and Val-251–Pro-261. Position 335 to 342 (Gly-335 to Thr-342) interacts with ATP.

It belongs to the AAA ATPase family. Spastin subfamily. Homohexamer. The homohexamer is stabilized by ATP-binding. The homohexamer may adopt a ring conformation through which microtubules pass prior to being severed. Interacts with microtubules.

The protein resides in the membrane. The protein localises to the cytoplasm. It is found in the cytoskeleton. It localises to the microtubule organizing center. Its subcellular location is the centrosome. The protein resides in the perinuclear region. The protein localises to the nucleus. The catalysed reaction is n ATP + n H2O + a microtubule = n ADP + n phosphate + (n+1) alpha/beta tubulin heterodimers.. ATP-dependent microtubule severing protein that specifically recognizes and cuts microtubules that are polyglutamylated. Preferentially recognizes and acts on microtubules decorated with short polyglutamate tails: severing activity increases as the number of glutamates per tubulin rises from one to eight, but decreases beyond this glutamylation threshold. Microtubule severing promotes reorganization of cellular microtubule arrays and the release of microtubules from the centrosome following nucleation. Required for membrane traffic from the endoplasmic reticulum (ER) to the Golgi and for completion of the abscission stage of cytokinesis. Also plays a role in axon growth and the formation of axonal branches. This chain is Spastin, found in Danio rerio (Zebrafish).